An 808-amino-acid chain; its full sequence is MVKETLIPPSSTSMTTGTSSSSSLSMTLSSTNALSFLSKGWREVWDSADADLQLMRDRANSVKNLASTFDREIENFLNNSARSAFPVGSPSASSFSNEIGIMKKLQPKISEFRRVYSAPEISRKVMERWGPARAKLGMDLSAIKKAIVSEMELDERQGVLEMSRLRRRRNSDRVRFTEFFAEAERDGEAYFGDWEPIRSLKSRFKEFEKRSSLEILSGFKNSEFVEKLKTSFKSIYKETDEAKDVPPLDVPELLACLVRQSEPFLDQIGVRKDTCDRIVESLCKCKSQQLWRLPSAQASDLIENDNHGVDLDMRIASVLQSTGHHYDGGFWTDFVKPETPENKRHVAIVTTASLPWMTGTAVNPLFRAAYLAKAAKQSVTLVVPWLCESDQELVYPNNLTFSSPEEQESYIRKWLEERIGFKADFKISFYPGKFSKERRSIFPAGDTSQFISSKDADIAILEEPEHLNWYYHGKRWTDKFNHVVGIVHTNYLEYIKREKNGALQAFFVNHVNNWVTRAYCDKVLRLSAATQDLPKSVVCNVHGVNPKFLMIGEKIAEERSRGEQAFSKGAYFLGKMVWAKGYRELIDLMAKHKSELGSFNLDVYGNGEDAVEVQRAAKKHDLNLNFLKGRDHADDALHKYKVFINPSISDVLCTATAEALAMGKFVVCADHPSNEFFRSFPNCLTYKTSEDFVSKVQEAMTKEPLPLTPEQMYNLSWEAATQRFMEYSDLDKILNNGEGGRKMRKSRSVPSFNEVVDGGLAFSHYVLTGNDFLRLCTGATPRTKDYDNQHCKDLNLVPPHVHKPIFGW.

Residues 1-23 form a disordered region; the sequence is MVKETLIPPSSTSMTTGTSSSSS. Residues 1-58 constitute a chloroplast transit peptide; that stretch reads MVKETLIPPSSTSMTTGTSSSSSLSMTLSSTNALSFLSKGWREVWDSADADLQLMRDR. The segment covering 10 to 23 has biased composition (low complexity); it reads SSTSMTTGTSSSSS.

This sequence belongs to the glycosyltransferase group 1 family. Glycosyltransferase 4 subfamily.

It is found in the plastid. It localises to the chloroplast outer membrane. The catalysed reaction is a 1,2-diacyl-3-O-(beta-D-galactosyl)-sn-glycerol + UDP-alpha-D-galactose = a 1,2-diacyl-3-O-[alpha-D-galactosyl-(1-&gt;6)-beta-D-galactosyl]-sn-glycerol + UDP + H(+). Functionally, involved in the synthesis of diacylglycerol galactolipids that are specifically found in thylakoid membranes. Specific for alpha-glycosidic linkages. Responsible for the final assembly of galactolipids in photosynthetic membranes. Digalactosyldiacylglycerol (DGDG) provides stability to the photosystem I (PSI) complex, especially to the PsaA, PsaB, PsaC, PsaL and PsaH subunits. This Arabidopsis thaliana (Mouse-ear cress) protein is Digalactosyldiacylglycerol synthase 1, chloroplastic.